The following is a 349-amino-acid chain: Protein MULTIPLE CHLOROPLAST DIVISION SITE 1 (349 aa).

Residues 1–52 (MASIDSLQFHSLCNLQSSIGRAKLQNPSSLVIFRRRPVNLNWVQFETKGSFV) constitute a chloroplast transit peptide. Over 53–116 (CKAIGDSSTP…VVFLMKKCSV (64 aa)) the chain is Chloroplast intermembrane. A helical membrane pass occupies residues 117–139 (NSIWIGVCITATVLVAAIRAYVV). Residues 140–349 (RKSRDNQRAG…NSSSEETHKS (210 aa)) lie on the Stromal side of the membrane. Residues 315-349 (QRPYKFSAKLEGENIQKNSQENHTGNSSSEETHKS) form a disordered region. Polar residues predominate over residues 329–343 (IQKNSQENHTGNSSS).

In terms of assembly, interacts with MIND1. Interacts with ARC6 in the chloroplast stroma and binds to FtsZ2-1 in an ARC6-dependent manner.

The protein localises to the plastid. The protein resides in the chloroplast inner membrane. In terms of biological role, required for chloroplast division. Together with MIND1 and ARC3, regulates FtsZ ring positioning in chloroplasts in an ARC6-dependent manner. Determines the site of chloroplast division in concert with MIND1. Not directly involved in ring formation, but required for MIND1 and MINE1 localization to regulate FtsZ ring formation during plastidial constriction. This is Protein MULTIPLE CHLOROPLAST DIVISION SITE 1 from Arabidopsis thaliana (Mouse-ear cress).